Reading from the N-terminus, the 263-residue chain is Protein YpjB (263 aa).

Over residues 233–244 the composition is skewed to acidic residues; the sequence is DFDDSSSEDDPV. Residues 233 to 263 form a disordered region; sequence DFDDSSSEDDPVENSPVVTSPVVSSSKSSFQ. Low complexity predominate over residues 245 to 263; it reads ENSPVVTSPVVSSSKSSFQ.

The sequence is that of Protein YpjB (ypjB) from Escherichia coli (strain K12).